Here is a 103-residue protein sequence, read N- to C-terminus: Small ribosomal subunit protein uS10 (103 aa).

This sequence belongs to the universal ribosomal protein uS10 family. As to quaternary structure, part of the 30S ribosomal subunit.

Functionally, involved in the binding of tRNA to the ribosomes. This chain is Small ribosomal subunit protein uS10, found in Korarchaeum cryptofilum (strain OPF8).